The chain runs to 576 residues: Proline--tRNA ligase (576 aa).

This sequence belongs to the class-II aminoacyl-tRNA synthetase family. ProS type 1 subfamily. In terms of assembly, homodimer.

The protein localises to the cytoplasm. The enzyme catalyses tRNA(Pro) + L-proline + ATP = L-prolyl-tRNA(Pro) + AMP + diphosphate. Functionally, catalyzes the attachment of proline to tRNA(Pro) in a two-step reaction: proline is first activated by ATP to form Pro-AMP and then transferred to the acceptor end of tRNA(Pro). As ProRS can inadvertently accommodate and process non-cognate amino acids such as alanine and cysteine, to avoid such errors it has two additional distinct editing activities against alanine. One activity is designated as 'pretransfer' editing and involves the tRNA(Pro)-independent hydrolysis of activated Ala-AMP. The other activity is designated 'posttransfer' editing and involves deacylation of mischarged Ala-tRNA(Pro). The misacylated Cys-tRNA(Pro) is not edited by ProRS. The protein is Proline--tRNA ligase of Bordetella petrii (strain ATCC BAA-461 / DSM 12804 / CCUG 43448).